The chain runs to 299 residues: Protease HtpX homolog (299 aa).

The next 2 membrane-spanning stretches (helical) occupy residues 15–35 and 39–59; these read ILLLVFFLLLALVGYAVGYLF and GLGGLVIALIIGFIYALSMIF. His-143 provides a ligand contact to Zn(2+). Glu-144 is a catalytic residue. Residue His-147 coordinates Zn(2+). A run of 2 helical transmembrane segments spans residues 158–178 and 198–218; these read IAVALASAITMLSSMAGRMMW and IIMLVVSLLAIVLAPLAATLV. Glu-227 contributes to the Zn(2+) binding site.

The protein belongs to the peptidase M48B family. Zn(2+) is required as a cofactor.

It localises to the cell membrane. In Streptococcus pneumoniae serotype 19F (strain G54), this protein is Protease HtpX homolog.